Consider the following 781-residue polypeptide: Aconitate hydratase, mitochondrial (781 aa).

Residues Met1 to Cys27 constitute a mitochondrion transit peptide. A Pyrrolidone carboxylic acid modification is found at Gln28. Lys31 carries the N6-succinyllysine modification. Lys50 is subject to N6-acetyllysine; alternate. Lys50 is subject to N6-succinyllysine; alternate. Gln99 is a substrate binding site. An N6-acetyllysine; alternate mark is found at Lys138 and Lys144. Residues Lys138 and Lys144 each carry the N6-succinyllysine; alternate modification. Asp192–His194 provides a ligand contact to substrate. Residue Lys233 is modified to N6-acetyllysine; alternate. Lys233 is modified (N6-succinyllysine; alternate). Position 385 (Cys385) interacts with [4Fe-4S] cluster. At Lys411 the chain carries N6-succinyllysine. [4Fe-4S] cluster-binding residues include Cys448 and Cys451. The substrate site is built by Arg474 and Arg479. 2 positions are modified to N6-acetyllysine; alternate: Lys517 and Lys523. N6-succinyllysine; alternate is present on residues Lys517 and Lys523. Positions Leu524–Phe537 are enriched in basic and acidic residues. The tract at residues Leu524–Thr561 is disordered. Lys549 carries the N6-succinyllysine modification. The span at Ser551 to Thr561 shows a compositional bias: polar residues. Residue Ser559 is modified to Phosphoserine. Residue Lys573 is modified to N6-acetyllysine; alternate. An N6-succinyllysine; alternate modification is found at Lys573. Residues Lys577 and Lys591 each carry the N6-succinyllysine modification. Lys605 carries the post-translational modification N6-acetyllysine; alternate. Lys605 is modified (N6-succinyllysine; alternate). Residue Arg607 coordinates substrate. Position 628 is an N6-succinyllysine (Lys628). Ser670 is modified (phosphoserine). Residue Ser670–Arg671 coordinates substrate. Lys689 carries the post-translational modification N6-succinyllysine. Residues Lys723 and Lys730 each carry the N6-acetyllysine; alternate modification. An N6-succinyllysine; alternate mark is found at Lys723 and Lys730. N6-acetyllysine is present on residues Lys736, Lys739, and Lys743.

It belongs to the aconitase/IPM isomerase family. Monomer. [4Fe-4S] cluster is required as a cofactor. In terms of processing, forms covalent cross-links mediated by transglutaminase TGM2, between a glutamine and the epsilon-amino group of a lysine residue, forming homopolymers and heteropolymers.

It is found in the mitochondrion. It carries out the reaction citrate = D-threo-isocitrate. It participates in carbohydrate metabolism; tricarboxylic acid cycle; isocitrate from oxaloacetate: step 2/2. Functionally, catalyzes the isomerization of citrate to isocitrate via cis-aconitate. This Sus scrofa (Pig) protein is Aconitate hydratase, mitochondrial (ACO2).